We begin with the raw amino-acid sequence, 126 residues long: uncharacterized protein (126 aa).

T68 is subject to Phosphothreonine.

This is an uncharacterized protein from Pseudomonas aeruginosa (strain UCBPP-PA14).